Consider the following 871-residue polypeptide: Isoleucine--tRNA ligase (871 aa).

Residues 57 to 67 (PYANGNLHMGH) carry the 'HIGH' region motif. Glu554 provides a ligand contact to L-isoleucyl-5'-AMP. The 'KMSKS' region signature appears at 595 to 599 (KMSKS). Lys598 provides a ligand contact to ATP.

The protein belongs to the class-I aminoacyl-tRNA synthetase family. IleS type 1 subfamily. In terms of assembly, monomer.

The protein resides in the cytoplasm. It catalyses the reaction tRNA(Ile) + L-isoleucine + ATP = L-isoleucyl-tRNA(Ile) + AMP + diphosphate. Catalyzes the attachment of isoleucine to tRNA(Ile). As IleRS can inadvertently accommodate and process structurally similar amino acids such as valine, to avoid such errors it has two additional distinct tRNA(Ile)-dependent editing activities. One activity is designated as 'pretransfer' editing and involves the hydrolysis of activated Val-AMP. The other activity is designated 'posttransfer' editing and involves deacylation of mischarged Val-tRNA(Ile). This Staphylococcus epidermidis protein is Isoleucine--tRNA ligase.